The sequence spans 629 residues: Mitochondrial Rho GTPase 1 (629 aa).

Residues methionine 1–arginine 600 lie on the Cytoplasmic side of the membrane. Residues serine 2 to histidine 170 enclose the Miro 1 domain. GTP contacts are provided by residues glycine 11–serine 18, aspartate 59–arginine 63, and asparagine 115–aspartate 118. EF-hand domains are found at residues alanine 186 to lysine 221 and alanine 306 to leucine 341. 9 residues coordinate Ca(2+): aspartate 199, aspartate 201, aspartate 203, tyrosine 205, glutamate 210, aspartate 319, aspartate 321, aspartate 323, and glutamate 330. Residues arginine 421–asparagine 585 form the Miro 2 domain. GTP is bound by residues glycine 430–serine 437, glutamate 466–glycine 470, and leucine 535–aspartate 538. The helical; Anchor for type IV membrane protein transmembrane segment at alanine 601–tryptophan 621 threads the bilayer. Topologically, residues arginine 622 to alanine 629 are mitochondrial intermembrane.

Belongs to the mitochondrial Rho GTPase family.

The protein resides in the mitochondrion outer membrane. Functionally, mitochondrial GTPase involved in mitochondrial trafficking. Probably involved in control of anterograde transport of mitochondria and their subcellular distribution. In Neurospora crassa (strain ATCC 24698 / 74-OR23-1A / CBS 708.71 / DSM 1257 / FGSC 987), this protein is Mitochondrial Rho GTPase 1 (gem-1).